The chain runs to 114 residues: DNA-directed RNA polymerases II, IV and V subunit 9B (114 aa).

Zn(2+) contacts are provided by Cys-7, Cys-10, Cys-29, Cys-32, Cys-76, Cys-79, Cys-103, and Cys-108. The TFIIS-type zinc finger occupies Lys-72–Arg-113.

It belongs to the archaeal RpoM/eukaryotic RPA12/RPB9/RPC11 RNA polymerase family. In terms of assembly, component of the RNA polymerase II, IV and V complexes. Interacts with NRPD1.

The protein resides in the nucleus. Its subcellular location is the nucleolus. Functionally, DNA-dependent RNA polymerase catalyzes the transcription of DNA into RNA using the four ribonucleoside triphosphates as substrates. Component of RNA polymerase II which synthesizes mRNA precursors and many functional non-coding RNAs. Pol II is the central component of the basal RNA polymerase II transcription machinery. It is composed of mobile elements that move relative to each other. Component of RNA polymerases IV and V which mediate short-interfering RNAs (siRNA) accumulation and subsequent RNA-directed DNA methylation-dependent (RdDM) transcriptional gene silencing (TGS) of endogenous repeated sequences, including transposable elements. Required for RNA silencing. This is DNA-directed RNA polymerases II, IV and V subunit 9B (NRPB9B) from Arabidopsis thaliana (Mouse-ear cress).